Here is a 47-residue protein sequence, read N- to C-terminus: ATP-dependent zinc metalloprotease FTSH, chloroplastic (47 aa).

This sequence in the N-terminal section; belongs to the AAA ATPase family. The protein in the C-terminal section; belongs to the peptidase M41 family. The cofactor is Zn(2+).

It localises to the plastid. It is found in the chloroplast membrane. Functionally, seems to act as an ATP-dependent zinc metallopeptidase. This Populus euphratica (Euphrates poplar) protein is ATP-dependent zinc metalloprotease FTSH, chloroplastic.